The chain runs to 457 residues: Exodeoxyribonuclease 7 large subunit (457 aa).

Belongs to the XseA family. In terms of assembly, heterooligomer composed of large and small subunits.

It localises to the cytoplasm. It carries out the reaction Exonucleolytic cleavage in either 5'- to 3'- or 3'- to 5'-direction to yield nucleoside 5'-phosphates.. Its function is as follows. Bidirectionally degrades single-stranded DNA into large acid-insoluble oligonucleotides, which are then degraded further into small acid-soluble oligonucleotides. The sequence is that of Exodeoxyribonuclease 7 large subunit from Cronobacter sakazakii (strain ATCC BAA-894) (Enterobacter sakazakii).